The following is a 507-amino-acid chain: 3-octaprenyl-4-hydroxybenzoate carboxy-lyase (507 aa).

Asparagine 177 serves as a coordination point for Mn(2+). Residues isoleucine 180 to arginine 182, arginine 194 to leucine 196, and arginine 199 to glycine 200 each bind prenylated FMN. Glutamate 243 contributes to the Mn(2+) binding site. Aspartate 302 acts as the Proton donor in catalysis.

The protein belongs to the UbiD family. Homohexamer. The cofactor is prenylated FMN. Mn(2+) is required as a cofactor.

It localises to the cell membrane. It catalyses the reaction a 4-hydroxy-3-(all-trans-polyprenyl)benzoate + H(+) = a 2-(all-trans-polyprenyl)phenol + CO2. It functions in the pathway cofactor biosynthesis; ubiquinone biosynthesis. Catalyzes the decarboxylation of 3-octaprenyl-4-hydroxy benzoate to 2-octaprenylphenol, an intermediate step in ubiquinone biosynthesis. The chain is 3-octaprenyl-4-hydroxybenzoate carboxy-lyase from Cupriavidus metallidurans (strain ATCC 43123 / DSM 2839 / NBRC 102507 / CH34) (Ralstonia metallidurans).